Reading from the N-terminus, the 100-residue chain is MAKKSMIEREKKRSRLIAKYADKRAELKEQLRQAEDLDDKIEIQRQLQRLPRNSAPSRHRNRCWVTGRPRGYYRDFGLSRNVLREWAHQGLLPGVVKSSW.

The protein belongs to the universal ribosomal protein uS14 family. In terms of assembly, part of the 30S ribosomal subunit. Contacts proteins S3 and S10.

Its function is as follows. Binds 16S rRNA, required for the assembly of 30S particles and may also be responsible for determining the conformation of the 16S rRNA at the A site. In Gloeothece citriformis (strain PCC 7424) (Cyanothece sp. (strain PCC 7424)), this protein is Small ribosomal subunit protein uS14.